A 541-amino-acid polypeptide reads, in one-letter code: Zinc finger protein 513 (541 aa).

The disordered stretch occupies residues 1–120; that stretch reads MPRRKQSHPQ…ARGERPGPAC (120 aa). The span at 44 to 55 shows a compositional bias: acidic residues; sequence LEFEEEEEEEEG. 2 positions are modified to phosphoserine: Ser-85 and Ser-96. Basic and acidic residues predominate over residues 103–115; the sequence is EPARGPGEARGER. 8 C2H2-type zinc fingers span residues 150–172, 178–200, 206–228, 360–382, 388–410, 416–438, 444–466, and 472–494; these read YSCRLCAFVSHYSSHLKRHMQTH, FRCGRCPYASAQLVNLTRHTRTH, YRCPHCPFACSSLGNLRRHQRTH, FACSLCPFATHYPNHLARHMKTH, FRCARCPYASAHLDNLKRHQRVH, YKCPLCPYACGNLANLKRHGRIH, FRCSLCNYSCNQSMNLKRHMLRH, and FRCATCAYTTGHWDNYKRHQKVH. Residues 492-541 form a disordered region; it reads KVHGHGGAGGPGLSAPEGWAPPHSPPSVLSTRGSAALGATGSRALHTDSP.

Belongs to the krueppel C2H2-type zinc-finger protein family. In terms of assembly, binds DNA. Can associate with the proximal promoter regions of PAX6 and SP4, and their known targets including ARR3, RHO, OPN1MW2 and OPN1SW.

The protein resides in the nucleus. In terms of biological role, transcriptional regulator that plays a role in retinal development and maintenance. The polypeptide is Zinc finger protein 513 (Znf513) (Rattus norvegicus (Rat)).